The following is a 345-amino-acid chain: NADPH dehydrogenase (345 aa).

23–26 (SPMC) is a binding site for FMN. Position 28 (tyrosine 28) interacts with substrate. Positions 60 and 102 each coordinate FMN. 164 to 167 (HGAH) contributes to the substrate binding site. Residues arginine 215 and 307 to 308 (GR) each bind FMN.

This sequence belongs to the NADH:flavin oxidoreductase/NADH oxidase family. NamA subfamily. Homotetramer. The cofactor is FMN.

It carries out the reaction A + NADPH + H(+) = AH2 + NADP(+). In terms of biological role, catalyzes the reduction of the double bond of an array of alpha,beta-unsaturated aldehydes and ketones. It also reduces the nitro group of nitroester and nitroaromatic compounds. It could have a role in detoxification processes. In Bacillus anthracis (strain CDC 684 / NRRL 3495), this protein is NADPH dehydrogenase.